Consider the following 412-residue polypeptide: Acetate kinase (412 aa).

Mg(2+) is bound at residue asparagine 10. Position 17 (lysine 17) interacts with ATP. The tract at residues 40 to 61 is disordered; it reads ETSRLAHTPSAGGGAEPRERTG. Substrate is bound at residue arginine 95. Catalysis depends on aspartate 152, which acts as the Proton donor/acceptor. ATP contacts are provided by residues 212–216, 286–288, and 334–338; these read HLGNG, DMR, and GVGEN. Mg(2+) is bound at residue glutamate 388.

Belongs to the acetokinase family. As to quaternary structure, homodimer. It depends on Mg(2+) as a cofactor. Mn(2+) is required as a cofactor.

The protein localises to the cytoplasm. It carries out the reaction acetate + ATP = acetyl phosphate + ADP. It participates in metabolic intermediate biosynthesis; acetyl-CoA biosynthesis; acetyl-CoA from acetate: step 1/2. Its function is as follows. Catalyzes the formation of acetyl phosphate from acetate and ATP. Can also catalyze the reverse reaction. The protein is Acetate kinase of Streptomyces griseus subsp. griseus (strain JCM 4626 / CBS 651.72 / NBRC 13350 / KCC S-0626 / ISP 5235).